Reading from the N-terminus, the 182-residue chain is Inner membrane assembly complex subunit 17 (182 aa).

Residues 1–45 constitute a mitochondrion transit peptide; it reads MLKRRSNALITLSRTKLFPITTVAYYHRRLLNQQRRAVSTSPKKE. Residues 46-107 are Mitochondrial matrix-facing; it reads IKSLEDLANL…EIPVKRFIRP (62 aa). The chain crosses the membrane as a helical span at residues 108–127; the sequence is LWMFILMGSSVYLLLHFSWW. Positions 128–158 form a coiled coil; it reads KLEHEERESQLKKEVEILEHQLNELIIQDKT. Topologically, residues 128–182 are mitochondrial intermembrane; the sequence is KLEHEERESQLKKEVEILEHQLNELIIQDKTHNTSRGKGSNESTHMKPWYRRWFW.

The protein belongs to the INA17 family. Component of the inner membrane assembly (INA) complex, composed of INA17 and INA22. Interacts with a subset of F(1)F(0)-ATP synthase subunits of the F(1)-domain and the peripheral stalk.

It localises to the mitochondrion inner membrane. In terms of biological role, component of the INA complex (INAC) that promotes the biogenesis of mitochondrial F(1)F(0)-ATP synthase. INAC facilitates the assembly of the peripheral stalk and promotes the assembly of the catalytic F(1)-domain with the membrane-embedded F(0)-domain. This is Inner membrane assembly complex subunit 17 from Saccharomyces cerevisiae (strain YJM789) (Baker's yeast).